The primary structure comprises 347 residues: Bifunctional dihydroflavonol 4-reductase/flavanone 4-reductase (347 aa).

Positions 44 and 163 each coordinate NADP(+).

It belongs to the NAD(P)-dependent epimerase/dehydratase family. Dihydroflavonol-4-reductase subfamily.

The catalysed reaction is a (2R,3S,4S)-leucoanthocyanidin + NADP(+) = a (2R,3R)-dihydroflavonol + NADPH + H(+). The enzyme catalyses (2S)-flavan-4-ol + NADP(+) = (2S)-flavanone + NADPH + H(+). Its function is as follows. Bifunctional enzyme involved in the flavonoid metabolism. May use dihydroquercetin, eriodictyol, garbanzol (5-deoxydihydrokaempferol), dihydrofisetin (5-deoxydihydroquercetin), dihydrokaempferol to a low extent (5%), but not naringenin, 5-deoxynaringenin or butin (5-deoxyeriodictyol) as substrate. This Pyrus communis (Pear) protein is Bifunctional dihydroflavonol 4-reductase/flavanone 4-reductase (DFR).